The sequence spans 208 residues: Truncated thymidylate kinase (208 aa).

Belongs to the thymidylate kinase family.

Catalyzes the conversion of dTMP to dTDP. The chain is Truncated thymidylate kinase (TMK) from Ornithodoros (relapsing fever ticks).